Here is a 361-residue protein sequence, read N- to C-terminus: Phenylalanine--tRNA ligase alpha subunit (361 aa).

Position 260 (Glu-260) interacts with Mg(2+).

It belongs to the class-II aminoacyl-tRNA synthetase family. Phe-tRNA synthetase alpha subunit type 1 subfamily. Tetramer of two alpha and two beta subunits. Requires Mg(2+) as cofactor.

The protein resides in the cytoplasm. The catalysed reaction is tRNA(Phe) + L-phenylalanine + ATP = L-phenylalanyl-tRNA(Phe) + AMP + diphosphate + H(+). In Allorhizobium ampelinum (strain ATCC BAA-846 / DSM 112012 / S4) (Agrobacterium vitis (strain S4)), this protein is Phenylalanine--tRNA ligase alpha subunit.